The chain runs to 79 residues: Acyl carrier protein (79 aa).

Residues 2-77 enclose the Carrier domain; sequence SEVAEKVKKI…DAIDYIEKKK (76 aa). Ser37 carries the post-translational modification O-(pantetheine 4'-phosphoryl)serine.

Belongs to the acyl carrier protein (ACP) family. In terms of processing, 4'-phosphopantetheine is transferred from CoA to a specific serine of apo-ACP by AcpS. This modification is essential for activity because fatty acids are bound in thioester linkage to the sulfhydryl of the prosthetic group.

The protein resides in the cytoplasm. Its pathway is lipid metabolism; fatty acid biosynthesis. In terms of biological role, carrier of the growing fatty acid chain in fatty acid biosynthesis. The chain is Acyl carrier protein from Acidiphilium cryptum (strain JF-5).